A 657-amino-acid polypeptide reads, in one-letter code: DNA mismatch repair protein MutL (657 aa).

This sequence belongs to the DNA mismatch repair MutL/HexB family.

In terms of biological role, this protein is involved in the repair of mismatches in DNA. It is required for dam-dependent methyl-directed DNA mismatch repair. May act as a 'molecular matchmaker', a protein that promotes the formation of a stable complex between two or more DNA-binding proteins in an ATP-dependent manner without itself being part of a final effector complex. This chain is DNA mismatch repair protein MutL, found in Streptococcus agalactiae serotype III (strain NEM316).